A 138-amino-acid chain; its full sequence is Large ribosomal subunit protein uL16 (138 aa).

The span at 1–16 shows a compositional bias: basic residues; that stretch reads MLIPRRVKHRKQHHPG. The interval 1 to 25 is disordered; it reads MLIPRRVKHRKQHHPGRSGQATGGT.

The protein belongs to the universal ribosomal protein uL16 family. Part of the 50S ribosomal subunit.

Its function is as follows. Binds 23S rRNA and is also seen to make contacts with the A and possibly P site tRNAs. This is Large ribosomal subunit protein uL16 from Renibacterium salmoninarum (strain ATCC 33209 / DSM 20767 / JCM 11484 / NBRC 15589 / NCIMB 2235).